Reading from the N-terminus, the 529-residue chain is O-acetylstemmadenine oxidase (529 aa).

An N-terminal signal peptide occupies residues Met-1–Gly-23. Cys-32 and Cys-92 are joined by a disulfide. Residue Asn-52 is glycosylated (N-linked (GlcNAc...) asparagine). Positions Lys-70 to Val-244 constitute an FAD-binding PCMH-type domain. FAD-binding positions include Ile-102–Asp-108, Ser-113, Val-168–Ser-169, Gly-173–His-177, and Phe-183. Asn-293 is a glycosylation site (N-linked (GlcNAc...) asparagine). FAD is bound at residue Trp-465.

This sequence belongs to the oxygen-dependent FAD-linked oxidoreductase family. Requires FAD as cofactor. Expressed in leaf epidermis.

Its subcellular location is the endoplasmic reticulum. The protein resides in the vacuole. The protein localises to the vesicle. The enzyme catalyses O-acetyl-15alpha-stemmadenine + O2 = precondylocarpine acetate + H2O2. The protein operates within alkaloid biosynthesis. Its function is as follows. Component of the seco-iridoid and derivatives monoterpenoid indole alkaloids (MIAs, e.g. vinblastine, catharanthine, tabersonine, vincadifformine, vindoline, vincristine, quinine and strychnine) biosynthesis pathway. Converts O-acetylstemmadenine (OAS) to reactive acetylated intermediates, likely dihydroprecondylocarpine acetate. The chain is O-acetylstemmadenine oxidase from Catharanthus roseus (Madagascar periwinkle).